We begin with the raw amino-acid sequence, 369 residues long: Glutamate 5-kinase (369 aa).

Residue Lys8 participates in ATP binding. 3 residues coordinate substrate: Ser49, Asp136, and Asn148. ATP contacts are provided by residues 168–169 (TD) and 212–218 (TGGMMTK). One can recognise a PUA domain in the interval 277–355 (TGKLYLDSGA…KEISTILGYV (79 aa)).

This sequence belongs to the glutamate 5-kinase family.

It localises to the cytoplasm. It carries out the reaction L-glutamate + ATP = L-glutamyl 5-phosphate + ADP. It participates in amino-acid biosynthesis; L-proline biosynthesis; L-glutamate 5-semialdehyde from L-glutamate: step 1/2. Its function is as follows. Catalyzes the transfer of a phosphate group to glutamate to form L-glutamate 5-phosphate. This chain is Glutamate 5-kinase, found in Trichormus variabilis (strain ATCC 29413 / PCC 7937) (Anabaena variabilis).